Consider the following 81-residue polypeptide: Probable antitoxin MazE2 (81 aa).

As to quaternary structure, forms a complex with cognate toxin MazF2.

Its function is as follows. Antitoxin component of a type II toxin-antitoxin (TA) system. This is Probable antitoxin MazE2 (mazE2) from Mycobacterium tuberculosis (strain ATCC 25618 / H37Rv).